The chain runs to 369 residues: tRNA-specific 2-thiouridylase MnmA (369 aa).

Residues 16-23 and methionine 42 each bind ATP; that span reads AMSGGVDS. Cysteine 110 acts as the Nucleophile in catalysis. Cysteine 110 and cysteine 206 are joined by a disulfide. Glycine 134 contacts ATP. Positions 156–158 are interaction with tRNA; it reads KDQ. Catalysis depends on cysteine 206, which acts as the Cysteine persulfide intermediate.

This sequence belongs to the MnmA/TRMU family.

It is found in the cytoplasm. The enzyme catalyses S-sulfanyl-L-cysteinyl-[protein] + uridine(34) in tRNA + AH2 + ATP = 2-thiouridine(34) in tRNA + L-cysteinyl-[protein] + A + AMP + diphosphate + H(+). Its function is as follows. Catalyzes the 2-thiolation of uridine at the wobble position (U34) of tRNA, leading to the formation of s(2)U34. This Orientia tsutsugamushi (strain Boryong) (Rickettsia tsutsugamushi) protein is tRNA-specific 2-thiouridylase MnmA.